We begin with the raw amino-acid sequence, 105 residues long: MIPGEYQLKDGDIELCAGRERIQLDVGNTGDRPVQIGSHYHFAEANPALDFDRVKVRGYRLDVAAGTAIRFEPGQTRSVTLIPFAGTREIYGFRGEVMGSLDSTN.

The protein belongs to the urease beta subunit family. Heterotrimer of UreA (gamma), UreB (beta) and UreC (alpha) subunits. Three heterotrimers associate to form the active enzyme.

It is found in the cytoplasm. It catalyses the reaction urea + 2 H2O + H(+) = hydrogencarbonate + 2 NH4(+). It participates in nitrogen metabolism; urea degradation; CO(2) and NH(3) from urea (urease route): step 1/1. This Marinobacter nauticus (strain ATCC 700491 / DSM 11845 / VT8) (Marinobacter aquaeolei) protein is Urease subunit beta.